The primary structure comprises 36 residues: MTATLSNFLWSIFWGGVVVALGAAALTAISRIDRIR.

A helical transmembrane segment spans residues 9-29; it reads LWSIFWGGVVVALGAAALTAI.

This sequence belongs to the PsbX family. Type 1 subfamily. In terms of assembly, PSII is composed of 1 copy each of membrane proteins PsbA, PsbB, PsbC, PsbD, PsbE, PsbF, PsbH, PsbI, PsbJ, PsbK, PsbL, PsbM, PsbT, PsbX, Psb30/Ycf12, peripheral proteins PsbO, CyanoQ (PsbQ), PsbU, PsbV and a large number of cofactors. It forms dimeric complexes.

The protein localises to the cell inner membrane. Involved in the binding and/or turnover of quinones at the Q(B) site of photosystem II (PSII). PSII is a light-driven water plastoquinone oxidoreductase, using light energy to abstract electrons from H(2)O, generating a proton gradient subsequently used for ATP formation. This is Photosystem II reaction center protein X from Gloeobacter violaceus (strain ATCC 29082 / PCC 7421).